We begin with the raw amino-acid sequence, 433 residues long: Zinc finger and SCAN domain-containing protein 4 (433 aa).

Residues 44-126 enclose the SCAN box domain; that stretch reads RMVLNSFQDS…RFIEDLTDDS (83 aa). Composition is skewed to polar residues over residues 165–185, 195–210, and 277–299; these read TTRE…SLET, GWNS…ENIT, and QPEQ…STCE. Disordered stretches follow at residues 165 to 210 and 275 to 301; these read TTRE…ENIT and ISQP…CEVH. 4 C2H2-type zinc fingers span residues 312-334, 340-362, 368-390, and 396-418; these read YKCE…QRRH, FVCP…QIIH, FTCS…ERIH, and YTCP…MRTH.

Its subcellular location is the nucleus. The protein localises to the chromosome. The protein resides in the telomere. In terms of biological role, embryonic stem (ES) cell-specific transcription factor required to regulate ES cell pluripotency. Binds telomeres and plays a key role in genomic stability in ES cells by regulating telomere elongation. Acts as an activator of spontaneous telomere sister chromatid exchange (T-SCE) and telomere elongation in undifferentiated ES cells. This is Zinc finger and SCAN domain-containing protein 4 (ZSCAN4) from Homo sapiens (Human).